The primary structure comprises 408 residues: Collagen and calcium-binding EGF domain-containing protein 1 (408 aa).

A signal peptide spans 1-35; sequence MVPPPLPSRGGAAKRQLGKSLGPLLLLLALGHTWT. An EGF-like; calcium-binding domain is found at 135 to 176; it reads DIDECATSNTTLCAHICINTMGSYHCECREGYILEDDGRTCT. Disulfide bonds link cysteine 139/cysteine 151, cysteine 147/cysteine 160, and cysteine 162/cysteine 175. Asparagine 143 carries an N-linked (GlcNAc...) asparagine glycan. An N-linked (GlcNAc...) asparagine glycan is attached at asparagine 183. Disordered stretches follow at residues 246 to 335 and 361 to 408; these read YLPG…GPPG and HRTH…NFYP. Collagen-like domains follow at residues 247–292 and 302–335; these read LPGP…PMGP and GRRG…GPPG. Pro residues predominate over residues 272–281; the sequence is PGMPGPPGQP. Positions 283–294 are enriched in low complexity; sequence PRGSMGPMGPSP. Over residues 325–334 the composition is skewed to pro residues; that stretch reads PGPPGSPGPP. Serine 387 carries an O-linked (Xyl...) (chondroitin sulfate) serine glycan. Basic and acidic residues predominate over residues 390 to 402; that stretch reads DYSRRTEARDPEA.

The protein belongs to the CCBE1 family.

It is found in the secreted. Required for lymphangioblast budding and angiogenic sprouting from venous endothelium during embryogenesis. The polypeptide is Collagen and calcium-binding EGF domain-containing protein 1 (Ccbe1) (Mus musculus (Mouse)).